A 225-amino-acid polypeptide reads, in one-letter code: MNSIEFPLLARTTQNSVISTTLNDLSNWSRLSSLWPLLYGTSCCFIEFASLIGSRFDFDRYGLVPRSSPRQADLILTAGTVTMKMAPSLVRLYEQMPEPKYVIAMGACTITGGMFSTDSYSTVRGVDKLIPVDVYLPGCPPKPEAVIDAITKLRKKIAREIYEERIRSQEENRCFTTNHKFHVGRSIHTGNYDQGLLYQSPSTSEIPPETFFKYKSSVSSHELVN.

[4Fe-4S] cluster contacts are provided by C43, C44, C108, and C139.

Belongs to the complex I 20 kDa subunit family. As to quaternary structure, NDH is composed of at least 16 different subunits, 5 of which are encoded in the nucleus. [4Fe-4S] cluster serves as cofactor.

The protein resides in the plastid. Its subcellular location is the chloroplast thylakoid membrane. It catalyses the reaction a plastoquinone + NADH + (n+1) H(+)(in) = a plastoquinol + NAD(+) + n H(+)(out). It carries out the reaction a plastoquinone + NADPH + (n+1) H(+)(in) = a plastoquinol + NADP(+) + n H(+)(out). In terms of biological role, NDH shuttles electrons from NAD(P)H:plastoquinone, via FMN and iron-sulfur (Fe-S) centers, to quinones in the photosynthetic chain and possibly in a chloroplast respiratory chain. The immediate electron acceptor for the enzyme in this species is believed to be plastoquinone. Couples the redox reaction to proton translocation, and thus conserves the redox energy in a proton gradient. The sequence is that of NAD(P)H-quinone oxidoreductase subunit K, chloroplastic from Eucalyptus globulus subsp. globulus (Tasmanian blue gum).